A 554-amino-acid chain; its full sequence is Glucose-6-phosphate isomerase (554 aa).

Glutamate 359 (proton donor) is an active-site residue. Active-site residues include histidine 390 and lysine 518.

The protein belongs to the GPI family.

Its subcellular location is the cytoplasm. It carries out the reaction alpha-D-glucose 6-phosphate = beta-D-fructose 6-phosphate. The protein operates within carbohydrate biosynthesis; gluconeogenesis. It participates in carbohydrate degradation; glycolysis; D-glyceraldehyde 3-phosphate and glycerone phosphate from D-glucose: step 2/4. Its function is as follows. Catalyzes the reversible isomerization of glucose-6-phosphate to fructose-6-phosphate. The polypeptide is Glucose-6-phosphate isomerase (Pseudomonas syringae pv. syringae (strain B728a)).